The primary structure comprises 137 residues: Protein BNS1 (137 aa).

Functionally, component of the FEAR (CDC14 early anaphase release) network which promotes CDC14 release from the nucleolus during early anaphase and is required for the efficient segregation of telomeric and nucleolar regions. Although BNS1 can partially compensate for a lack of SPO12 function when overexpressed, it does not appear to play any role in controlling meiotic nuclear division. In Saccharomyces cerevisiae (strain ATCC 204508 / S288c) (Baker's yeast), this protein is Protein BNS1 (BNS1).